We begin with the raw amino-acid sequence, 115 residues long: Transmembrane protein 218 (115 aa).

3 consecutive transmembrane segments (helical) span residues 5 to 25, 38 to 58, and 81 to 101; these read VLGV…VLLL, FSII…LLFP, and YVLL…LLTH.

Belongs to the TMEM218 family. In terms of assembly, interacts with TMEM67.

Its subcellular location is the membrane. It localises to the cell projection. The protein localises to the cilium. Its function is as follows. May be involved in ciliary biogenesis or function. This Rattus norvegicus (Rat) protein is Transmembrane protein 218 (Tmem218).